The chain runs to 398 residues: MKQLTILGSTGSIGNSTLGVVRANPELFKITALVAGRNVHQMAQQCLEFAPRYAAMSDETSAKALRLILAENGSRTEVYSGEKAACELAAIDDVDQVMAAIVGVAGLPSTLAAIRAGKQVLLANKESLITCGKLFMDEVMHSRAQLLPIDSEHNAIFQSLPEKVQSQLGYSSLSDNGVSRIILTGSGGPLRETPLVQFADVTPDQACAHPNWSMGRKISVDSATMMNKGLEYIEARWLFNASAEQVEVILHPQSVIHSMVRYHDGSVLAQMGTPDMRTPIAHAMAYPMRVNSGVAPLDFCKIRELTFAEPDYQRYPCLKLAIDASNAGQAATTALNAANEISVMAFLDSRIRFTDIAVINRMVVEQLSLPEPASVDEVLVIDRKARDAAVQAIAKLNN.

NADPH is bound by residues threonine 10, glycine 11, serine 12, isoleucine 13, glycine 36, arginine 37, asparagine 38, and asparagine 124. Lysine 125 is a 1-deoxy-D-xylulose 5-phosphate binding site. Glutamate 126 contacts NADPH. Aspartate 150 lines the Mn(2+) pocket. Residues serine 151, glutamate 152, serine 186, and histidine 209 each contribute to the 1-deoxy-D-xylulose 5-phosphate site. Glutamate 152 provides a ligand contact to Mn(2+). Glycine 215 contacts NADPH. Positions 222, 227, 228, and 231 each coordinate 1-deoxy-D-xylulose 5-phosphate. Residue glutamate 231 participates in Mn(2+) binding.

It belongs to the DXR family. In terms of assembly, homodimer. It depends on Mg(2+) as a cofactor. Requires Mn(2+) as cofactor.

The enzyme catalyses 2-C-methyl-D-erythritol 4-phosphate + NADP(+) = 1-deoxy-D-xylulose 5-phosphate + NADPH + H(+). It functions in the pathway isoprenoid biosynthesis; isopentenyl diphosphate biosynthesis via DXP pathway; isopentenyl diphosphate from 1-deoxy-D-xylulose 5-phosphate: step 1/6. Functionally, catalyzes the NADPH-dependent rearrangement and reduction of 1-deoxy-D-xylulose-5-phosphate (DXP) to 2-C-methyl-D-erythritol 4-phosphate (MEP). The polypeptide is 1-deoxy-D-xylulose 5-phosphate reductoisomerase (Yersinia enterocolitica serotype O:8 / biotype 1B (strain NCTC 13174 / 8081)).